The sequence spans 314 residues: Olfactory receptor 5D14 (314 aa).

At 1–27 (MMMVLRNLSMEPTFALLGFTDYPKLQI) the chain is on the extracellular side. Residue asparagine 7 is glycosylated (N-linked (GlcNAc...) asparagine). Residues 28-48 (PLFLVFLLMYVITVVGNLGMI) traverse the membrane as a helical segment. Residues 49 to 56 (IIIKINPK) lie on the Cytoplasmic side of the membrane. Residues 57–77 (FHTPMYFFLSHLSFVDFCYSS) form a helical membrane-spanning segment. Over 78 to 101 (IVTPKLLENLVMADKSIFYFSCMM) the chain is Extracellular. Residues 102–122 (QYFLSCTAVVTESFLLAVMAY) traverse the membrane as a helical segment. Over 123–141 (DRFVAICNPLLYTVAMSQR) the chain is Cytoplasmic. Residues 142 to 162 (LCALLVAGSYLWGMFGPLVLL) traverse the membrane as a helical segment. Residues 163-198 (CYALRLNFSGPNVINHFFCEYTALISVSGSDILIPH) lie on the Extracellular side of the membrane. Asparagine 169 carries N-linked (GlcNAc...) asparagine glycosylation. The chain crosses the membrane as a helical span at residues 199 to 219 (LLLFSFATFNEMCTLLIILTS). Topologically, residues 220–239 (YVFIFVTVLKIRSVSGRHKA) are cytoplasmic. A helical membrane pass occupies residues 240-260 (FSTWASHLTSITIFHGTILFL). Topologically, residues 261 to 273 (YCVPNSKNSRQTV) are extracellular. Residues 274-294 (KVASVFYTVVNPMLNPLIYSL) traverse the membrane as a helical segment. Over 295 to 314 (RNKDVKDAFWKLIHTQVPFH) the chain is Cytoplasmic.

This sequence belongs to the G-protein coupled receptor 1 family.

It is found in the cell membrane. Odorant receptor. This is Olfactory receptor 5D14 (OR5D14) from Homo sapiens (Human).